Reading from the N-terminus, the 496-residue chain is Glycerol kinase (496 aa).

Thr-14 serves as a coordination point for ADP. Residues Thr-14 and Thr-15 each contribute to the ATP site. Residue Thr-14 participates in sn-glycerol 3-phosphate binding. Residues Arg-84, Glu-85, Tyr-136, and Asp-246 each coordinate sn-glycerol 3-phosphate. Arg-84, Glu-85, Tyr-136, Asp-246, and Gln-247 together coordinate glycerol. ADP contacts are provided by Thr-268 and Gly-313. ATP is bound by residues Thr-268, Gly-313, Gln-317, and Gly-414. ADP-binding residues include Gly-414 and Asn-418.

The protein belongs to the FGGY kinase family.

It catalyses the reaction glycerol + ATP = sn-glycerol 3-phosphate + ADP + H(+). Its pathway is polyol metabolism; glycerol degradation via glycerol kinase pathway; sn-glycerol 3-phosphate from glycerol: step 1/1. Inhibited by fructose 1,6-bisphosphate (FBP). Its function is as follows. Key enzyme in the regulation of glycerol uptake and metabolism. Catalyzes the phosphorylation of glycerol to yield sn-glycerol 3-phosphate. This is Glycerol kinase from Myxococcus xanthus (strain DK1622).